We begin with the raw amino-acid sequence, 252 residues long: Large ribosomal subunit protein uL4 (252 aa).

It belongs to the universal ribosomal protein uL4 family. In terms of assembly, part of the 50S ribosomal subunit.

Functionally, one of the primary rRNA binding proteins, this protein initially binds near the 5'-end of the 23S rRNA. It is important during the early stages of 50S assembly. It makes multiple contacts with different domains of the 23S rRNA in the assembled 50S subunit and ribosome. Its function is as follows. Forms part of the polypeptide exit tunnel. This is Large ribosomal subunit protein uL4 from Methanococcus maripaludis (strain C7 / ATCC BAA-1331).